Consider the following 208-residue polypeptide: Putative archaetidylserine decarboxylase proenzyme (208 aa).

Serine 172 functions as the Schiff-base intermediate with substrate; via pyruvic acid in the catalytic mechanism. Serine 172 is modified (pyruvic acid (Ser); by autocatalysis).

The protein belongs to the phosphatidylserine decarboxylase family. PSD-A subfamily. In terms of assembly, heterodimer of a large membrane-associated beta subunit and a small pyruvoyl-containing alpha subunit. Pyruvate is required as a cofactor. Post-translationally, is synthesized initially as an inactive proenzyme. Formation of the active enzyme involves a self-maturation process in which the active site pyruvoyl group is generated from an internal serine residue via an autocatalytic post-translational modification. Two non-identical subunits are generated from the proenzyme in this reaction, and the pyruvate is formed at the N-terminus of the alpha chain, which is derived from the carboxyl end of the proenzyme. The post-translation cleavage follows an unusual pathway, termed non-hydrolytic serinolysis, in which the side chain hydroxyl group of the serine supplies its oxygen atom to form the C-terminus of the beta chain, while the remainder of the serine residue undergoes an oxidative deamination to produce ammonia and the pyruvoyl prosthetic group on the alpha chain.

It is found in the cell membrane. The catalysed reaction is archaetidylserine + H(+) = archaetidylethanolamine + CO2. Catalyzes the formation of archaetidylethanolamine (PtdEtn) from archaetidylserine (PtdSer). The protein is Putative archaetidylserine decarboxylase proenzyme of Methanosarcina mazei (strain ATCC BAA-159 / DSM 3647 / Goe1 / Go1 / JCM 11833 / OCM 88) (Methanosarcina frisia).